The primary structure comprises 136 residues: MLKRFSISLDDNLLEIFDQHIAEKAYNNRSEAIRDLIRKNFVLKEWEEDRDVMGVISLIYDHHQSQLQKKVTDLQHDFHHHIVSTTHVHMDHDNCLEVIIVKGRAGDVIELADGLAALKGVRDSNLAMNSTGKSLH.

Ni(2+) is bound by residues His-76, His-87, His-89, and Cys-95.

This sequence belongs to the transcriptional regulatory CopG/NikR family. Requires Ni(2+) as cofactor.

Its function is as follows. Transcriptional regulator. The polypeptide is Putative nickel-responsive regulator (Desulfotalea psychrophila (strain LSv54 / DSM 12343)).